Consider the following 700-residue polypeptide: Neoverrucotoxin subunit beta (700 aa).

Positions 506-700 constitute a B30.2/SPRY domain; it reads HMPGVETIKD…QKVNGQIKLL (195 aa).

This sequence belongs to the SNTX/VTX toxin family. Heterodimer of alpha and beta subunits. Not glycosylated. In terms of processing, four intrachain disulfide linkages are present in the heterodimer. No interchain disulfide bound links the two subunits. In terms of tissue distribution, expressed by the venom gland.

It localises to the secreted. Functionally, has hemolytic and lethal activities. Its hemolytic activity is inhibited by anionic lipids, especially potently by cardiolipin. In Synanceia verrucosa (Reef stonefish), this protein is Neoverrucotoxin subunit beta.